Consider the following 319-residue polypeptide: MQRLDPWHGRCELRFEHRQTEHGDAGTVHQGGCSAPFKLLRAEQGKNGRCELPILHTAGGLVGGDQLSIALDLNTNSRCLITSVAAQKVYGSIGRSRLHPEGQWARQQVHCKLANSSDLEWLPQELVLYANALFEQHLTVQLPANASFLSAEIVRLGRTAAGETLQQGRWRSALSLCRRSVEPHQASRWELVDRLDLGGDALNDQHGLNKRPVFGSLVWAAPMPLNGEALTQLLELVRSDREGLNGTMRCSALDQGLVARYSGPSSRDARFWFSRIWARTRALRALSAPQIPRVWPLQEQPLPPSSFKTNTAVPAVRTH.

Residues 298-319 (QEQPLPPSSFKTNTAVPAVRTH) are disordered.

The protein belongs to the UreD family. As to quaternary structure, ureD, UreF and UreG form a complex that acts as a GTP-hydrolysis-dependent molecular chaperone, activating the urease apoprotein by helping to assemble the nickel containing metallocenter of UreC. The UreE protein probably delivers the nickel.

It is found in the cytoplasm. Its function is as follows. Required for maturation of urease via the functional incorporation of the urease nickel metallocenter. The protein is Urease accessory protein UreD of Synechococcus sp. (strain WH7805).